The sequence spans 501 residues: Flagellin (501 aa).

The protein belongs to the bacterial flagellin family.

The protein localises to the secreted. It localises to the bacterial flagellum. Flagellin is the subunit protein which polymerizes to form the filaments of bacterial flagella. In Salmonella choleraesuis (strain SC-B67), this protein is Flagellin (fliC).